The chain runs to 437 residues: Enolase 2 (437 aa).

Residue Lys-60 forms a Glycyl lysine isopeptide (Lys-Gly) (interchain with G-Cter in ubiquitin) linkage. Ser-138 carries the phosphoserine modification. His-160 is a catalytic residue. Position 188 is a phosphoserine (Ser-188). Lys-243 is covalently cross-linked (Glycyl lysine isopeptide (Lys-Gly) (interchain with G-Cter in ubiquitin)). Residues Asp-247 and Glu-296 each coordinate Mg(2+). Phosphothreonine is present on Thr-313. Asp-321 serves as a coordination point for Mg(2+). Thr-324 is subject to Phosphothreonine. Residue Lys-358 forms a Glycyl lysine isopeptide (Lys-Gly) (interchain with G-Cter in ubiquitin) linkage.

It belongs to the enolase family. In terms of assembly, homodimer. It depends on Mg(2+) as a cofactor.

It is found in the cytoplasm. It carries out the reaction (2R)-2-phosphoglycerate = phosphoenolpyruvate + H2O. The protein operates within carbohydrate degradation; glycolysis; pyruvate from D-glyceraldehyde 3-phosphate: step 4/5. The chain is Enolase 2 (ENO2) from Saccharomyces cerevisiae (strain ATCC 204508 / S288c) (Baker's yeast).